A 333-amino-acid chain; its full sequence is MSAADRLLEAWYRGHPALALLRPLEWLYRRVVQGKRARFLAGQGDIYRAPVPVLVVGNITVGGTGKTPLILFLIEHCRARGLKVGVVSRGYGATPPSLPWRVRADQSAAQAGDEPLLIVQRTGVPLMIDPDRSRAVRALLAEEPLDLILCDDGLQHYRLARDLELVLIDAARGLGNRRCLPAGPLREPAERLAEVDAVLSNGAETDSAEGYAFRLQPSALVNLVSGERLGLEHFPPGQAVHAVAGIGNPQRFFNTLEALNWRPVPHPFADHAQYDAAQLSFEPPLPLLMTEKDAVKCRAFAAADWWYLAVDAVPTPAFVDWLDKELARLIPGS.

An ATP-binding site is contributed by 60–67 (TVGGTGKT).

It belongs to the LpxK family.

It catalyses the reaction a lipid A disaccharide + ATP = a lipid IVA + ADP + H(+). Its pathway is glycolipid biosynthesis; lipid IV(A) biosynthesis; lipid IV(A) from (3R)-3-hydroxytetradecanoyl-[acyl-carrier-protein] and UDP-N-acetyl-alpha-D-glucosamine: step 6/6. In terms of biological role, transfers the gamma-phosphate of ATP to the 4'-position of a tetraacyldisaccharide 1-phosphate intermediate (termed DS-1-P) to form tetraacyldisaccharide 1,4'-bis-phosphate (lipid IVA). The sequence is that of Tetraacyldisaccharide 4'-kinase from Ectopseudomonas mendocina (strain ymp) (Pseudomonas mendocina).